The chain runs to 261 residues: Cytochrome c oxidase subunit 3 (261 aa).

At 1–15 (MAHQAHAYHMVDPSP) the chain is on the mitochondrial matrix side. A helical transmembrane segment spans residues 16 to 34 (WPLTGAIAALLLTSGTAVW). Residues 35 to 40 (FHFHSL) are Mitochondrial intermembrane-facing. The helical transmembrane segment at 41 to 66 (TLLTLGNILLLLTMYQWWRDIIREGT) threads the bilayer. Residues 67 to 72 (FQGHHT) are Mitochondrial matrix-facing. A helical transmembrane segment spans residues 73-105 (PPVQKGLRYGMILFITSEVFFFLGFFWAFYHAS). At 106–128 (LAPTPELGGCWPPTGITTLDPFE) the chain is on the mitochondrial intermembrane side. A helical transmembrane segment spans residues 129–152 (VPLLNTAVLLASGVTVTWAHHSIM). The Mitochondrial matrix portion of the chain corresponds to 153 to 155 (EGE). The chain crosses the membrane as a helical span at residues 156 to 183 (RKQTIQALTLTILLGFYFTFLQGMEYYE). The Mitochondrial intermembrane segment spans residues 184 to 190 (APFTIAD). The chain crosses the membrane as a helical span at residues 191-223 (GVYGSTFFVATGFHGLHVIIGSTFLAVCLLRQV). Residues 224-232 (QYHFTSEHH) are Mitochondrial matrix-facing. The chain crosses the membrane as a helical span at residues 233–256 (FGFEAAAWYWHFVDVVWLFLYVSI). The Mitochondrial intermembrane segment spans residues 257–261 (YWWGS).

Belongs to the cytochrome c oxidase subunit 3 family. As to quaternary structure, component of the cytochrome c oxidase (complex IV, CIV), a multisubunit enzyme composed of 14 subunits. The complex is composed of a catalytic core of 3 subunits MT-CO1, MT-CO2 and MT-CO3, encoded in the mitochondrial DNA, and 11 supernumerary subunits COX4I, COX5A, COX5B, COX6A, COX6B, COX6C, COX7A, COX7B, COX7C, COX8 and NDUFA4, which are encoded in the nuclear genome. The complex exists as a monomer or a dimer and forms supercomplexes (SCs) in the inner mitochondrial membrane with NADH-ubiquinone oxidoreductase (complex I, CI) and ubiquinol-cytochrome c oxidoreductase (cytochrome b-c1 complex, complex III, CIII), resulting in different assemblies (supercomplex SCI(1)III(2)IV(1) and megacomplex MCI(2)III(2)IV(2)).

It localises to the mitochondrion inner membrane. It carries out the reaction 4 Fe(II)-[cytochrome c] + O2 + 8 H(+)(in) = 4 Fe(III)-[cytochrome c] + 2 H2O + 4 H(+)(out). Component of the cytochrome c oxidase, the last enzyme in the mitochondrial electron transport chain which drives oxidative phosphorylation. The respiratory chain contains 3 multisubunit complexes succinate dehydrogenase (complex II, CII), ubiquinol-cytochrome c oxidoreductase (cytochrome b-c1 complex, complex III, CIII) and cytochrome c oxidase (complex IV, CIV), that cooperate to transfer electrons derived from NADH and succinate to molecular oxygen, creating an electrochemical gradient over the inner membrane that drives transmembrane transport and the ATP synthase. Cytochrome c oxidase is the component of the respiratory chain that catalyzes the reduction of oxygen to water. Electrons originating from reduced cytochrome c in the intermembrane space (IMS) are transferred via the dinuclear copper A center (CU(A)) of subunit 2 and heme A of subunit 1 to the active site in subunit 1, a binuclear center (BNC) formed by heme A3 and copper B (CU(B)). The BNC reduces molecular oxygen to 2 water molecules using 4 electrons from cytochrome c in the IMS and 4 protons from the mitochondrial matrix. This Oncorhynchus clarkii (Cutthroat trout) protein is Cytochrome c oxidase subunit 3 (mt-co3).